The primary structure comprises 435 residues: Keratin, type I cytoskeletal 18 (435 aa).

Residues Ser-2–Asn-84 are head. The coil 1A stretch occupies residues Glu-85–Ala-120. The 312-residue stretch at Glu-85 to Leu-396 folds into the IF rod domain. The tract at residues Leu-121–Thr-137 is linker 1. Residues Leu-138–Leu-229 are coil 1B. Residues Arg-230–Val-253 form a linker 12 region. The segment at Leu-254 to Gly-391 is coil 2. Residues Glu-392–Lys-435 are tail.

The protein belongs to the intermediate filament family. In terms of assembly, heterotetramer of two type I and two type II keratins. Keratin-18 associates with keratin-8. Phosphorylated. Post-translationally, proteolytically cleaved by caspases during epithelial cell apoptosis.

When phosphorylated, plays a role in filament reorganization. The protein is Keratin, type I cytoskeletal 18 of Acipenser baerii (Siberian sturgeon).